A 637-amino-acid polypeptide reads, in one-letter code: Chaperone protein HtpG (637 aa).

The segment at 1-345 (MSQQETHGFQ…SNDLPLNVSR (345 aa)) is a; substrate-binding. The segment at 346-562 (EILQDNQVTT…EGEMSTQMIK (217 aa)) is b. The c stretch occupies residues 563–637 (LMQAAGQPVP…TNQMLLASVK (75 aa)).

This sequence belongs to the heat shock protein 90 family. As to quaternary structure, homodimer.

It localises to the cytoplasm. Functionally, molecular chaperone. Has ATPase activity. The polypeptide is Chaperone protein HtpG (Shewanella frigidimarina (strain NCIMB 400)).